The following is a 165-amino-acid chain: Methylated-DNA--protein-cysteine methyltransferase (165 aa).

Residue C126 is the Nucleophile; methyl group acceptor of the active site.

It belongs to the MGMT family.

The protein resides in the cytoplasm. It carries out the reaction a 6-O-methyl-2'-deoxyguanosine in DNA + L-cysteinyl-[protein] = S-methyl-L-cysteinyl-[protein] + a 2'-deoxyguanosine in DNA. It catalyses the reaction a 4-O-methyl-thymidine in DNA + L-cysteinyl-[protein] = a thymidine in DNA + S-methyl-L-cysteinyl-[protein]. In terms of biological role, involved in the cellular defense against the biological effects of O6-methylguanine (O6-MeG) and O4-methylthymine (O4-MeT) in DNA. Repairs the methylated nucleobase in DNA by stoichiometrically transferring the methyl group to a cysteine residue in the enzyme. This is a suicide reaction: the enzyme is irreversibly inactivated. This chain is Methylated-DNA--protein-cysteine methyltransferase, found in Mycobacterium leprae (strain TN).